A 674-amino-acid polypeptide reads, in one-letter code: Probable potassium transport system protein Kup (674 aa).

12 consecutive transmembrane segments (helical) span residues 7-27 (IFWGALITLGIVYGDIGTSPL), 52-72 (LSLVFWTLMLMTTIKYVLIAL), 95-115 (WLILPALLGGAALLADGTLTP), 145-165 (LVTFVILLVLFLIQRFGTSFI), 169-189 (FGPLMLLWFSFLAIFGIVNLI), 204-224 (LMLLFSPANKVGIFILGSVFL), 244-264 (IYLTWPFVCGALVLNYFGQGA), 291-311 (VYLFGVLISTIAAIIASQALI), 342-362 (IYIRTINWSLCICTLLVLVYF), 368-388 (MEAAYGLAITITMLMTTILLS), 397-417 (VVFNGIFLAVFLSVELIFLIS), and 425-445 (GGYVTLLITLLILLIMVIWYF).

Belongs to the HAK/KUP transporter (TC 2.A.72) family.

The protein resides in the cell membrane. It carries out the reaction K(+)(in) + H(+)(in) = K(+)(out) + H(+)(out). Its function is as follows. Transport of potassium into the cell. Likely operates as a K(+):H(+) symporter. The chain is Probable potassium transport system protein Kup from Ligilactobacillus salivarius (strain UCC118) (Lactobacillus salivarius).